The sequence spans 473 residues: Argininosuccinate lyase (473 aa).

Ala2 carries the N-acetylalanine modification. Lys7 carries the N6-acetyllysine modification. Ser27 provides a ligand contact to 2-(N(omega)-L-arginino)succinate. The residue at position 69 (Lys69) is an N6-acetyllysine. The 2-(N(omega)-L-arginino)succinate site is built by Asn114 and Thr159. The Proton acceptor role is filled by His160. The active-site Proton donor is Ser281. An N6-acetyllysine modification is found at Lys288. Residues Asn289, Tyr321, Gln326, and Lys329 each contribute to the 2-(N(omega)-L-arginino)succinate site.

Belongs to the lyase 1 family. Argininosuccinate lyase subfamily. Homotetramer. Forms tissue-specific complexes with ASS1, SLC7A1, HSP90AA1 and nitric oxide synthase NOS1, NOS2 or NOS3; the complex maintenance is independent of ASL catalytic function. Acetylation modifies enzyme activity in response to alterations of extracellular nutrient availability. Acetylation increased with trichostin A (TSA) or with nicotinamide (NAM). Glucose increases acetylation by about a factor of 3 with decreasing enzyme activity. Acetylation on Lys-288 is decreased on the addition of extra amino acids resulting in activation of enzyme activity.

The enzyme catalyses 2-(N(omega)-L-arginino)succinate = fumarate + L-arginine. It participates in amino-acid biosynthesis; L-arginine biosynthesis; L-arginine from L-ornithine and carbamoyl phosphate: step 3/3. Its pathway is nitrogen metabolism; urea cycle; L-arginine and fumarate from (N(omega)-L-arginino)succinate: step 1/1. Its activity is regulated as follows. Enzyme activity is regulated by acetylation. Catalyzes the reversible cleavage of L-argininosuccinate to fumarate and L-arginine, an intermediate step reaction in the urea cycle mostly providing for hepatic nitrogen detoxification into excretable urea as well as de novo L-arginine synthesis in nonhepatic tissues. Essential regulator of intracellular and extracellular L-arginine pools. As part of citrulline-nitric oxide cycle, forms tissue-specific multiprotein complexes with argininosuccinate synthase ASS1, transport protein SLC7A1 and nitric oxide synthase NOS1, NOS2 or NOS3, allowing for cell-autonomous L-arginine synthesis while channeling extracellular L-arginine to nitric oxide synthesis pathway. The polypeptide is Argininosuccinate lyase (ASL) (Bos taurus (Bovine)).